A 241-amino-acid polypeptide reads, in one-letter code: Translation initiation factor IF-3 (241 aa).

A compositionally biased stretch (basic and acidic residues) spans alanine 193–glutamine 203. Residues alanine 193–glutamate 241 form a disordered region. Residues aspartate 212–glutamate 241 show a composition bias toward acidic residues.

This sequence belongs to the IF-3 family. As to quaternary structure, monomer.

It is found in the cytoplasm. Functionally, IF-3 binds to the 30S ribosomal subunit and shifts the equilibrium between 70S ribosomes and their 50S and 30S subunits in favor of the free subunits, thus enhancing the availability of 30S subunits on which protein synthesis initiation begins. This chain is Translation initiation factor IF-3, found in Sorangium cellulosum (strain So ce56) (Polyangium cellulosum (strain So ce56)).